Here is a 427-residue protein sequence, read N- to C-terminus: Enolase (427 aa).

Q163 provides a ligand contact to (2R)-2-phosphoglycerate. Catalysis depends on E205, which acts as the Proton donor. Residues D242, E285, and D312 each coordinate Mg(2+). (2R)-2-phosphoglycerate contacts are provided by K337, R366, S367, and K388. Residue K337 is the Proton acceptor of the active site.

It belongs to the enolase family. The cofactor is Mg(2+).

It localises to the cytoplasm. It is found in the secreted. Its subcellular location is the cell surface. It carries out the reaction (2R)-2-phosphoglycerate = phosphoenolpyruvate + H2O. Its pathway is carbohydrate degradation; glycolysis; pyruvate from D-glyceraldehyde 3-phosphate: step 4/5. Functionally, catalyzes the reversible conversion of 2-phosphoglycerate (2-PG) into phosphoenolpyruvate (PEP). It is essential for the degradation of carbohydrates via glycolysis. This Burkholderia orbicola (strain MC0-3) protein is Enolase.